The chain runs to 520 residues: Translation initiation factor IF3-1, mitochondrial (520 aa).

A mitochondrion-targeting transit peptide spans 1–66 (MAIWRIINRS…SNIFQNLRFL (66 aa)). Over residues 271–282 (ARVKEESPKPDS) the composition is skewed to basic and acidic residues. The segment at 271 to 520 (ARVKEESPKP…YGIFSTPKTK (250 aa)) is disordered. The span at 336-361 (EPQSPNQHVNPQRPRFSNQAPNQQPT) shows a compositional bias: polar residues. A compositionally biased stretch (pro residues) spans 369-379 (PNQPPSAPRPQ). Polar residues-rich tracts occupy residues 404–422 (NQAP…FPNQ) and 458–468 (FQNQAPNQQPT). Residues 473 to 485 (PQPPNPPRAPPRP) are compositionally biased toward pro residues.

Belongs to the IF-3 family. Monomer.

Its subcellular location is the mitochondrion. In terms of biological role, IF-3 binds to the 30S ribosomal subunit and shifts the equilibrium between 70S ribosomes and their 50S and 30S subunits in favor of the free subunits, thus enhancing the availability of 30S subunits on which protein synthesis initiation begins. In Arabidopsis thaliana (Mouse-ear cress), this protein is Translation initiation factor IF3-1, mitochondrial.